Here is a 744-residue protein sequence, read N- to C-terminus: Dual specificity protein kinase shkD (744 aa).

A disordered region spans residues 1-276 (MKRFFSNLFK…SGPPEILPEE (276 aa)). Low complexity-rich tracts occupy residues 25–70 (PTTS…NSNQ), 79–107 (SPST…SFTP), and 127–200 (TSTT…QTAS). Polar residues predominate over residues 201–210 (VNHTSSDQSL). The segment covering 211–236 (NAQNVTQTNNNNNNNNNNNNNNNANN) has biased composition (low complexity). One can recognise a Protein kinase domain in the interval 277–534 (IDRTDFLGQG…EILFRLNEIL (258 aa)). ATP is bound by residues 283-291 (LGQGSFGSV) and Lys304. The active-site Proton acceptor is Asp400. An SH2 domain is found at 641–734 (WFHGDIVREQ…LVPCPKFTQE (94 aa)).

The protein belongs to the protein kinase superfamily. Ser/Thr protein kinase family. SH2 domain-containing protein kinase subfamily.

It is found in the membrane. It catalyses the reaction L-seryl-[protein] + ATP = O-phospho-L-seryl-[protein] + ADP + H(+). It carries out the reaction L-threonyl-[protein] + ATP = O-phospho-L-threonyl-[protein] + ADP + H(+). Functionally, required for proper chemotaxis and phagocytosis; proper spatiotemporal control of F-actin levels in chemotaxing cells. Negative regulator of the PI3K (phosphatidylinositol 3 kinase) pathway. Predominantly phosphorylates serines and threonines and tyrosines at a lower level. The polypeptide is Dual specificity protein kinase shkD (shkD) (Dictyostelium discoideum (Social amoeba)).